The primary structure comprises 216 residues: Elongation factor Ts (216 aa).

Positions 81-84 (TDFV) are involved in Mg(2+) ion dislocation from EF-Tu.

It belongs to the EF-Ts family.

It localises to the cytoplasm. In terms of biological role, associates with the EF-Tu.GDP complex and induces the exchange of GDP to GTP. It remains bound to the aminoacyl-tRNA.EF-Tu.GTP complex up to the GTP hydrolysis stage on the ribosome. This Geotalea daltonii (strain DSM 22248 / JCM 15807 / FRC-32) (Geobacter daltonii) protein is Elongation factor Ts.